The sequence spans 431 residues: Adenylosuccinate synthetase (431 aa).

Residues 21–27 and 49–51 each bind GTP; these read GDEGKGK and GHT. D22 serves as the catalytic Proton acceptor. The Mg(2+) site is built by D22 and G49. Residues 22–25, 47–50, T138, R152, N230, T245, and R309 contribute to the IMP site; these read DEGK and NAGH. The active-site Proton donor is H50. 305 to 311 serves as a coordination point for substrate; sequence ATTGRPR. Residues R311, 337-339, and 419-421 contribute to the GTP site; these read KLD and GNG.

This sequence belongs to the adenylosuccinate synthetase family. As to quaternary structure, homodimer. Mg(2+) is required as a cofactor.

Its subcellular location is the cytoplasm. The enzyme catalyses IMP + L-aspartate + GTP = N(6)-(1,2-dicarboxyethyl)-AMP + GDP + phosphate + 2 H(+). It functions in the pathway purine metabolism; AMP biosynthesis via de novo pathway; AMP from IMP: step 1/2. Plays an important role in the de novo pathway and in the salvage pathway of purine nucleotide biosynthesis. Catalyzes the first committed step in the biosynthesis of AMP from IMP. This Paramecium tetraurelia protein is Adenylosuccinate synthetase.